We begin with the raw amino-acid sequence, 226 residues long: 3-isopropylmalate dehydratase small subunit (226 aa).

The disordered stretch occupies residues 204-226 (EAETVESAREPEAVEWAGPLADR).

This sequence belongs to the LeuD family. LeuD type 1 subfamily. In terms of assembly, heterodimer of LeuC and LeuD.

The catalysed reaction is (2R,3S)-3-isopropylmalate = (2S)-2-isopropylmalate. Its pathway is amino-acid biosynthesis; L-leucine biosynthesis; L-leucine from 3-methyl-2-oxobutanoate: step 2/4. Its function is as follows. Catalyzes the isomerization between 2-isopropylmalate and 3-isopropylmalate, via the formation of 2-isopropylmaleate. The sequence is that of 3-isopropylmalate dehydratase small subunit from Bifidobacterium animalis subsp. lactis (strain AD011).